We begin with the raw amino-acid sequence, 1866 residues long: Rho GTPase-activating protein 100F (1866 aa).

Disordered stretches follow at residues 22–98 (MLCC…AGVK), 262–336 (RRGN…NNYS), and 466–530 (LRSS…DTEA). The segment covering 59–77 (GNQQHHGNQQHHGNQQQHH) has biased composition (low complexity). One can recognise a PDZ domain in the interval 179–264 (LVEIVKRPGQ…LVLAIRQRRG (86 aa)). Residues 271–286 (PGPPTLSRPEQKPPPV) show a composition bias toward pro residues. Over residues 301–326 (TDRMPRPRSSRDRRTGDGREMTESRS) the composition is skewed to basic and acidic residues. The residue at position 719 (serine 719) is a Phosphoserine. Positions 745 to 775 (AGPASPSGSILSTGGHQSPAPTPSATLPRPH) are disordered. Over residues 750-760 (PSGSILSTGGH) the composition is skewed to polar residues. Residues 789–908 (KLDKPIVDIG…LRQSPLHQLA (120 aa)) form the C2 domain. The 201-residue stretch at 948–1148 (ADLETVVNRE…YLLQIWPQPQ (201 aa)) folds into the Rho-GAP domain. 6 disordered regions span residues 1273–1328 (GGSV…QVKI), 1356–1380 (PTTQADTESTLGCKESNGTASRRGN), 1393–1479 (SVVN…DLVS), 1514–1607 (FTPI…MVST), 1644–1727 (YTND…YGTL), and 1819–1840 (DEKPGSNGGNAHGEEKLGADKG). Over residues 1282 to 1292 (DPSPLPLPGTP) the composition is skewed to pro residues. Over residues 1293 to 1302 (SPGSSSASTG) the composition is skewed to low complexity. Composition is skewed to polar residues over residues 1356-1377 (PTTQADTESTLGCKESNGTASR), 1393-1408 (SVVNEESSYSSKYTGS), and 1416-1429 (GNSSYTPSKANASG). Over residues 1443 to 1479 (SSATSSSSSSQATVLSAGSTATSAPTTSSDDSDDLVS) the composition is skewed to low complexity. The segment covering 1538 to 1587 (QLVTPISGSSSKPGATTGAISKYTTGSVESSINANSQKLSSPSRLCNSKD) has biased composition (polar residues). Low complexity-rich tracts occupy residues 1590 to 1607 (SRTGTASSTTPATSMVST) and 1644 to 1658 (YTNDTKNSGSSSSKS). Residues 1659 to 1670 (GIGGGSGTGLGA) are compositionally biased toward gly residues. Low complexity-rich tracts occupy residues 1671-1688 (VSGASSETRSFGSTLFGS) and 1696-1720 (GSSHNHSSASPSPFTTTNGNGNHNT). Residues 1830–1839 (HGEEKLGADK) are compositionally biased toward basic and acidic residues.

Interacts (via PDZ domain) with Nrx-1; may recruit Nrx-1 to the presynaptic active zone.

Its subcellular location is the presynapse. In terms of biological role, GTPase activator for the Rho-type GTPases by converting them to an inactive GDP-bound state. Promotes the anchoring of Liprin-alpha clusters at synapses. Recruits and keeps Nrx-1 levels high in active zones in the presynapse opposite the postsynaptic region. The chain is Rho GTPase-activating protein 100F (RhoGAP100F) from Drosophila melanogaster (Fruit fly).